Reading from the N-terminus, the 522-residue chain is Serine/threonine-protein kinase BSK1-2 (522 aa).

The interval 1 to 54 (MGCCGSSLRVGSHAPEKPPRRARPPPPPPQPHHPRRPSFTLNAHQAAASSSAAS) is disordered. Gly2 is lipidated: N-myristoyl glycine. The region spanning 79–338 (ANIVSESGEK…KLVSILQPLQ (260 aa)) is the Protein kinase domain. ATP is bound by residues 85 to 93 (SGEKAPNLV) and Lys111. Catalysis depends on Asp205, which acts as the Proton acceptor.

The protein belongs to the protein kinase superfamily. Ser/Thr protein kinase family.

The protein localises to the cell membrane. The enzyme catalyses L-seryl-[protein] + ATP = O-phospho-L-seryl-[protein] + ADP + H(+). It catalyses the reaction L-threonyl-[protein] + ATP = O-phospho-L-threonyl-[protein] + ADP + H(+). Functionally, probable serine/threonine kinase that functions as a positive regulator of plant immunity. May be involved in the regulation of pattern-triggered immunity (PTI). Does not seem to be involved in responses to brassinosteroid (BR) signaling. The chain is Serine/threonine-protein kinase BSK1-2 from Oryza sativa subsp. japonica (Rice).